Consider the following 492-residue polypeptide: Adenosylhomocysteinase (492 aa).

Substrate is bound by residues T68, D153, and E215. 216–218 (TTT) contributes to the NAD(+) binding site. K245 and D249 together coordinate substrate. NAD(+)-binding positions include N250, 279-284 (GYGDVG), E302, N337, 358-360 (IGH), and N406.

This sequence belongs to the adenosylhomocysteinase family. Requires NAD(+) as cofactor.

It is found in the cytoplasm. It carries out the reaction S-adenosyl-L-homocysteine + H2O = L-homocysteine + adenosine. It functions in the pathway amino-acid biosynthesis; L-homocysteine biosynthesis; L-homocysteine from S-adenosyl-L-homocysteine: step 1/1. In terms of biological role, may play a key role in the regulation of the intracellular concentration of adenosylhomocysteine. In Mycobacterium leprae (strain Br4923), this protein is Adenosylhomocysteinase.